Consider the following 126-residue polypeptide: MPTIQQLIRQPRAPKKRRSKSPALQKCPQRRGVCLQVKTKTPKKPNSALRKVAWVRLSTGQEVIAYIGGEGHNLQEHSIVLVRGGRVKDLPGVRYHIVRGALDCAAVKDRKQGRSKYGAKRPKSKK.

The segment at 1–29 (MPTIQQLIRQPRAPKKRRSKSPALQKCPQ) is disordered. Asp-89 carries the 3-methylthioaspartic acid modification.

It belongs to the universal ribosomal protein uS12 family. As to quaternary structure, part of the 30S ribosomal subunit. Contacts proteins S8 and S17. May interact with IF1 in the 30S initiation complex.

With S4 and S5 plays an important role in translational accuracy. Its function is as follows. Interacts with and stabilizes bases of the 16S rRNA that are involved in tRNA selection in the A site and with the mRNA backbone. Located at the interface of the 30S and 50S subunits, it traverses the body of the 30S subunit contacting proteins on the other side and probably holding the rRNA structure together. The combined cluster of proteins S8, S12 and S17 appears to hold together the shoulder and platform of the 30S subunit. This is Small ribosomal subunit protein uS12 from Protochlamydia amoebophila (strain UWE25).